We begin with the raw amino-acid sequence, 142 residues long: Large ribosomal subunit protein uL11 (142 aa).

Belongs to the universal ribosomal protein uL11 family. Part of the ribosomal stalk of the 50S ribosomal subunit. Interacts with L10 and the large rRNA to form the base of the stalk. L10 forms an elongated spine to which L12 dimers bind in a sequential fashion forming a multimeric L10(L12)X complex. Post-translationally, one or more lysine residues are methylated.

In terms of biological role, forms part of the ribosomal stalk which helps the ribosome interact with GTP-bound translation factors. This is Large ribosomal subunit protein uL11 from Xanthomonas axonopodis pv. citri (strain 306).